We begin with the raw amino-acid sequence, 553 residues long: Protein spartin (553 aa).

The MIT domain occupies 15-96 (IRTAYKAAMT…ETELRYRLKV (82 aa)). Residues 105–130 (DDSAVEATEESRAEMDTKRPPLLAEN) are disordered. Basic and acidic residues predominate over residues 113–123 (EESRAEMDTKR). A Senescence domain is found at 325 to 509 (IVSAADFIAS…SQNVNYITPK (185 aa)).

As to quaternary structure, interacts with Eps-15 (via C-terminal region); the interaction is required for spartin localization to the NMJ presynaptic membrane. In terms of tissue distribution, expressed in larval brain, ventral nerve cord and neuropil (at protein level).

The protein resides in the presynaptic cell membrane. The protein localises to the early endosome. It localises to the lipid droplet. During postembryonic development, functions with endocytic adapter Eps-15 in neurons to restrain synaptic growth, by inhibiting BMP signaling, and to control synaptic endocytosis. Required presynaptically for neuromuscular junction (NMJ) neurotransmission. Inhibits neuronal BMP signaling by promoting endocytic internalization and subsequent endosomal trafficking of the BMP receptor wit. In this way, regulates the Fmr1 translational regulator controlling Futsch expression to modulate neuronal microtubule stability, which controls both synaptogenesis and neuronal survival. The sequence is that of Protein spartin from Drosophila melanogaster (Fruit fly).